A 359-amino-acid chain; its full sequence is UDP-3-O-acylglucosamine N-acyltransferase (359 aa).

Histidine 248 acts as the Proton acceptor in catalysis.

This sequence belongs to the transferase hexapeptide repeat family. LpxD subfamily. In terms of assembly, homotrimer.

It catalyses the reaction a UDP-3-O-[(3R)-3-hydroxyacyl]-alpha-D-glucosamine + a (3R)-hydroxyacyl-[ACP] = a UDP-2-N,3-O-bis[(3R)-3-hydroxyacyl]-alpha-D-glucosamine + holo-[ACP] + H(+). Its pathway is bacterial outer membrane biogenesis; LPS lipid A biosynthesis. Functionally, catalyzes the N-acylation of UDP-3-O-acylglucosamine using 3-hydroxyacyl-ACP as the acyl donor. Is involved in the biosynthesis of lipid A, a phosphorylated glycolipid that anchors the lipopolysaccharide to the outer membrane of the cell. This Chlamydia abortus (strain DSM 27085 / S26/3) (Chlamydophila abortus) protein is UDP-3-O-acylglucosamine N-acyltransferase.